A 161-amino-acid chain; its full sequence is Ragulator complex protein LAMTOR1 (161 aa).

Positions 1–43 (MGCCYSSENEDSDQDREERKLLLDPSSPPTKALNGAEPNYHSL) are disordered. The N-myristoyl glycine moiety is linked to residue G2. S-palmitoyl cysteine attachment occurs at residues C3 and C4. A Glycyl lysine isopeptide (Lys-Gly) (interchain with G-Cter in ubiquitin) cross-link involves residue K20. S27 carries the post-translational modification Phosphoserine. Residue K31 forms a Glycyl lysine isopeptide (Lys-Gly) (interchain with G-Cter in ubiquitin) linkage. A phosphoserine mark is found at S42 and S56. Residue K60 forms a Glycyl lysine isopeptide (Lys-Gly) (interchain with G-Cter in ubiquitin) linkage. Position 98 is a phosphoserine (S98). Glycyl lysine isopeptide (Lys-Gly) (interchain with G-Cter in ubiquitin) cross-links involve residues K103 and K104. The tract at residues 121–161 (SEPIPFSDLQQVSRIAAYAYSALSQIRVDAKEELVVQFGIP) is interaction with LAMTOR2 and LAMTOR3. At S141 the chain carries Phosphoserine.

The protein belongs to the LAMTOR1 family. In terms of assembly, part of the Ragulator complex composed of LAMTOR1, LAMTOR2, LAMTOR3, LAMTOR4 and LAMTOR5. LAMTOR4 and LAMTOR5 form a heterodimer that interacts, through LAMTOR1, with a LAMTOR2, LAMTOR3 heterodimer. Interacts with LAMTOR2 and LAMTOR3; the interaction is direct. The Ragulator complex interacts with both the mTORC1 complex and heterodimers constituted of the Rag GTPases RagA/RRAGA, RagB/RRAGB, RagC/RRAGC and RagD/RRAGD; regulated by amino acid availability. The Ragulator complex interacts with SLC38A9; the probable amino acid sensor. Component of the lysosomal folliculin complex (LFC), composed of FLCN, FNIP1 (or FNIP2), RagA/RRAGA or RagB/RRAGB GDP-bound, RagC/RRAGC or RagD/RRAGD GTP-bound, and Ragulator. Associates with the lysosomal V-ATPase complex; interaction promotes the guanine nucleotide exchange factor (GEF) of the Ragulator complex. Interacts with MMP14. Interacts with CDKN1B; prevents the interaction of CDKN1B with RHOA leaving RHOA in a form accessible to activation by ARHGEF2. Interacts with PIP4P1. In terms of processing, N-terminal myristoylation and palmitoylation mediates its recruitment to lysosome membranes, thereby promoting localization of the Ragulator complex to lysosomes. N-myristoylation by NMT1 is required for palmitoylation at Cys-3 and Cys-4. May be palmitoylated by ZDHHC3. Post-translationally, ubiquitinated at Lys-60, Lys-103 and Lys-104 by UBE3A, promoting its degradation by the proteasome. Ubiquitination at Lys-20 impairs the association with the lysosomal V-ATPase complex. Deubiquitination at Lys-20 by USP32 promotes the association with the lysosomal V-ATPase complex and subsequent activation of the mTORC1 complex.

Its subcellular location is the lysosome membrane. It localises to the late endosome membrane. Its function is as follows. Key component of the Ragulator complex, a multiprotein complex involved in amino acid sensing and activation of mTORC1, a signaling complex promoting cell growth in response to growth factors, energy levels, and amino acids. Activated by amino acids through a mechanism involving the lysosomal V-ATPase, the Ragulator plays a dual role for the small GTPases Rag (RagA/RRAGA, RagB/RRAGB, RagC/RRAGC and/or RagD/RRAGD): it (1) acts as a guanine nucleotide exchange factor (GEF), activating the small GTPases Rag and (2) mediates recruitment of Rag GTPases to the lysosome membrane. Activated Ragulator and Rag GTPases function as a scaffold recruiting mTORC1 to lysosomes where it is in turn activated. LAMTOR1 is directly responsible for anchoring the Ragulator complex to the lysosomal membrane. LAMTOR1 wraps around the other subunits of the Ragulator complex to hold them in place and interacts with the Rag GTPases, thereby playing a key role in the recruitment of the mTORC1 complex to lysosomes. Also involved in the control of embryonic stem cells differentiation via non-canonical RagC/RRAGC and RagD/RRAGD activation: together with FLCN, it is necessary to recruit and activate RagC/RRAGC and RagD/RRAGD at the lysosomes, and to induce exit of embryonic stem cells from pluripotency via non-canonical, mTOR-independent TFE3 inactivation. Also required for late endosomes/lysosomes biogenesis it may regulate both the recycling of receptors through endosomes and the MAPK signaling pathway through recruitment of some of its components to late endosomes. May be involved in cholesterol homeostasis regulating LDL uptake and cholesterol release from late endosomes/lysosomes. May also play a role in RHOA activation. The protein is Ragulator complex protein LAMTOR1 of Homo sapiens (Human).